An 87-amino-acid chain; its full sequence is NADH-ubiquinone oxidoreductase chain 4L (87 aa).

Transmembrane regions (helical) follow at residues 1 to 21 (MNLSIFLFLIGILGFILNRKN), 22 to 42 (IILMIIAIEIMLLAVTLLVLI), and 57 to 77 (LYIISIAGAESVIGLSILVAF).

This sequence belongs to the complex I subunit 4L family. As to quaternary structure, core subunit of respiratory chain NADH dehydrogenase (Complex I) which is composed of 45 different subunits.

Its subcellular location is the mitochondrion inner membrane. The catalysed reaction is a ubiquinone + NADH + 5 H(+)(in) = a ubiquinol + NAD(+) + 4 H(+)(out). Functionally, core subunit of the mitochondrial membrane respiratory chain NADH dehydrogenase (Complex I) which catalyzes electron transfer from NADH through the respiratory chain, using ubiquinone as an electron acceptor. The sequence is that of NADH-ubiquinone oxidoreductase chain 4L (ND4L) from Moniliophthora perniciosa (strain FA553 / isolate CP02) (Witches'-broom disease fungus).